Here is a 152-residue protein sequence, read N- to C-terminus: Dehydratase aurZ (152 aa).

The EthD domain occupies 34–129 (PSLSEKEYRH…APDHVNFADT (96 aa)).

This sequence belongs to the tpcK family.

The catalysed reaction is naphtopyrone YWA1 = norrubrofusarin + H2O + H(+). It participates in pigment biosynthesis. Dehydratase; part of the gene cluster that mediates the biosynthesis of aurofusarin, a red mycelium pigment which is acting as a mycotoxin. The first step is performed by the polyketide synthase which condenses one acetyl-CoA and 6 malonyl-CoA units to form the first intermediate, the cyclic heptaketide and yellow pigment YWA1. The C2 hydroxyl group in the pyrone ring of YWA1 is probably formed during ring closure by an aldol-type cyclization reaction. The dehydratase aurZ then acts as the first tailoring enzyme in the aurofusarin biosynthetic pathway by converting YWA1 to nor-rubrofusarin. Nor-rubrofusarin is then methylated to rubrofusarin by the O-methyltransferase aurJ. Rubrofusarin is then transported across the plasma membrane by the rubrofusarin-specific pump aurT for further enzymatic processing by the extracellular complex composed of GIP1, aurF, aurO and aurS to yield aurofusarin. This Gibberella zeae (strain ATCC MYA-4620 / CBS 123657 / FGSC 9075 / NRRL 31084 / PH-1) (Wheat head blight fungus) protein is Dehydratase aurZ.